The primary structure comprises 647 residues: 1-deoxy-D-xylulose-5-phosphate synthase (647 aa).

Thiamine diphosphate contacts are provided by residues His72 and 113 to 115 (GHA). Asp144 lines the Mg(2+) pocket. Residues 145-146 (GA), Asn174, Tyr287, and Glu370 each bind thiamine diphosphate. Asn174 is a Mg(2+) binding site.

Belongs to the transketolase family. DXPS subfamily. Homodimer. Requires Mg(2+) as cofactor. It depends on thiamine diphosphate as a cofactor.

It carries out the reaction D-glyceraldehyde 3-phosphate + pyruvate + H(+) = 1-deoxy-D-xylulose 5-phosphate + CO2. It functions in the pathway metabolic intermediate biosynthesis; 1-deoxy-D-xylulose 5-phosphate biosynthesis; 1-deoxy-D-xylulose 5-phosphate from D-glyceraldehyde 3-phosphate and pyruvate: step 1/1. In terms of biological role, catalyzes the acyloin condensation reaction between C atoms 2 and 3 of pyruvate and glyceraldehyde 3-phosphate to yield 1-deoxy-D-xylulose-5-phosphate (DXP). This chain is 1-deoxy-D-xylulose-5-phosphate synthase, found in Synechococcus sp. (strain WH7803).